Here is a 203-residue protein sequence, read N- to C-terminus: Urease accessory protein UreG (203 aa).

Position 14-21 (14-21) interacts with GTP; that stretch reads GPVGAGKT.

Belongs to the SIMIBI class G3E GTPase family. UreG subfamily. As to quaternary structure, homodimer. UreD, UreF and UreG form a complex that acts as a GTP-hydrolysis-dependent molecular chaperone, activating the urease apoprotein by helping to assemble the nickel containing metallocenter of UreC. The UreE protein probably delivers the nickel.

It is found in the cytoplasm. Facilitates the functional incorporation of the urease nickel metallocenter. This process requires GTP hydrolysis, probably effectuated by UreG. This chain is Urease accessory protein UreG, found in Jannaschia sp. (strain CCS1).